Here is a 218-residue protein sequence, read N- to C-terminus: Ribose-5-phosphate isomerase A (218 aa).

Substrate contacts are provided by residues lysine 7, 28-31 (TGST), 81-84 (DGAD), and 94-97 (KGGG). The active-site Proton acceptor is the glutamate 103. Lysine 121 serves as a coordination point for substrate.

It belongs to the ribose 5-phosphate isomerase family. Homodimer.

The catalysed reaction is aldehydo-D-ribose 5-phosphate = D-ribulose 5-phosphate. The protein operates within carbohydrate degradation; pentose phosphate pathway; D-ribose 5-phosphate from D-ribulose 5-phosphate (non-oxidative stage): step 1/1. Its function is as follows. Catalyzes the reversible conversion of ribose-5-phosphate to ribulose 5-phosphate. The polypeptide is Ribose-5-phosphate isomerase A (Vibrio vulnificus (strain YJ016)).